Consider the following 1009-residue polypeptide: DNA polymerase catalytic subunit (1009 aa).

It belongs to the DNA polymerase type-B family.

Its subcellular location is the host nucleus. The enzyme catalyses DNA(n) + a 2'-deoxyribonucleoside 5'-triphosphate = DNA(n+1) + diphosphate. The polypeptide is DNA polymerase catalytic subunit (9) (Saimiri sciureus (Common squirrel monkey)).